The chain runs to 430 residues: Probable dual-specificity RNA methyltransferase RlmN (430 aa).

The Proton acceptor role is filled by Glu-125. Residues Arg-152–Glu-395 enclose the Radical SAM core domain. Cys-159 and Cys-400 are disulfide-bonded. Positions 166, 170, and 173 each coordinate [4Fe-4S] cluster. Residues Gly-221 to Glu-222, Ser-255, Ser-278 to His-280, and Asn-357 each bind S-adenosyl-L-methionine. Residue Cys-400 is the S-methylcysteine intermediate of the active site.

It belongs to the radical SAM superfamily. RlmN family. The cofactor is [4Fe-4S] cluster.

It localises to the cytoplasm. The catalysed reaction is adenosine(2503) in 23S rRNA + 2 reduced [2Fe-2S]-[ferredoxin] + 2 S-adenosyl-L-methionine = 2-methyladenosine(2503) in 23S rRNA + 5'-deoxyadenosine + L-methionine + 2 oxidized [2Fe-2S]-[ferredoxin] + S-adenosyl-L-homocysteine. The enzyme catalyses adenosine(37) in tRNA + 2 reduced [2Fe-2S]-[ferredoxin] + 2 S-adenosyl-L-methionine = 2-methyladenosine(37) in tRNA + 5'-deoxyadenosine + L-methionine + 2 oxidized [2Fe-2S]-[ferredoxin] + S-adenosyl-L-homocysteine. Specifically methylates position 2 of adenine 2503 in 23S rRNA and position 2 of adenine 37 in tRNAs. The sequence is that of Probable dual-specificity RNA methyltransferase RlmN from Acidothermus cellulolyticus (strain ATCC 43068 / DSM 8971 / 11B).